The following is a 246-amino-acid chain: 1-(5-phosphoribosyl)-5-[(5-phosphoribosylamino)methylideneamino] imidazole-4-carboxamide isomerase (246 aa).

Catalysis depends on aspartate 8, which acts as the Proton acceptor. Aspartate 131 (proton donor) is an active-site residue.

Belongs to the HisA/HisF family.

The protein resides in the cytoplasm. It catalyses the reaction 1-(5-phospho-beta-D-ribosyl)-5-[(5-phospho-beta-D-ribosylamino)methylideneamino]imidazole-4-carboxamide = 5-[(5-phospho-1-deoxy-D-ribulos-1-ylimino)methylamino]-1-(5-phospho-beta-D-ribosyl)imidazole-4-carboxamide. It participates in amino-acid biosynthesis; L-histidine biosynthesis; L-histidine from 5-phospho-alpha-D-ribose 1-diphosphate: step 4/9. In Lactococcus lactis subsp. cremoris (strain SK11), this protein is 1-(5-phosphoribosyl)-5-[(5-phosphoribosylamino)methylideneamino] imidazole-4-carboxamide isomerase.